The sequence spans 443 residues: tRNA-2-methylthio-N(6)-dimethylallyladenosine synthase (443 aa).

The MTTase N-terminal domain occupies 3–120 (SKLYIKTFGC…LPELIDARRR (118 aa)). Residues Cys12, Cys49, Cys83, Cys157, Cys161, and Cys164 each contribute to the [4Fe-4S] cluster site. The Radical SAM core domain maps to 143–377 (RTTGATAFVS…KIQRNAQMIS (235 aa)). The TRAM domain occupies 378-441 (QSMVDTIQRV…SHTLRGEISD (64 aa)).

The protein belongs to the methylthiotransferase family. MiaB subfamily. Monomer. It depends on [4Fe-4S] cluster as a cofactor.

It localises to the cytoplasm. It carries out the reaction N(6)-dimethylallyladenosine(37) in tRNA + (sulfur carrier)-SH + AH2 + 2 S-adenosyl-L-methionine = 2-methylsulfanyl-N(6)-dimethylallyladenosine(37) in tRNA + (sulfur carrier)-H + 5'-deoxyadenosine + L-methionine + A + S-adenosyl-L-homocysteine + 2 H(+). Functionally, catalyzes the methylthiolation of N6-(dimethylallyl)adenosine (i(6)A), leading to the formation of 2-methylthio-N6-(dimethylallyl)adenosine (ms(2)i(6)A) at position 37 in tRNAs that read codons beginning with uridine. This is tRNA-2-methylthio-N(6)-dimethylallyladenosine synthase from Nitrosomonas eutropha (strain DSM 101675 / C91 / Nm57).